Consider the following 275-residue polypeptide: Beta-lactamase OXA-3 (275 aa).

Positions 1 to 21 are cleaved as a signal peptide; it reads MAIRIFAILFSTFVFGTFAHA. Ser72 functions as the Acyl-ester intermediate in the catalytic mechanism. Lys75 is modified (N6-carboxylysine). 210 to 212 serves as a coordination point for substrate; the sequence is KTG.

This sequence belongs to the class-D beta-lactamase family.

The enzyme catalyses a beta-lactam + H2O = a substituted beta-amino acid. In terms of biological role, this is an oxacillin-hydrolyzing beta-lactamase. This chain is Beta-lactamase OXA-3 (bla), found in Pseudomonas aeruginosa.